The primary structure comprises 880 residues: Translation initiation factor IF-2 (880 aa).

The segment at Lys-259–Thr-281 is disordered. The region spanning Ser-379–Lys-548 is the tr-type G domain. The segment at Gly-388–Thr-395 is G1. Gly-388 to Thr-395 serves as a coordination point for GTP. A G2 region spans residues Gly-413 to His-417. The G3 stretch occupies residues Asp-434 to Gly-437. GTP-binding positions include Asp-434 to His-438 and Asn-488 to Asp-491. The interval Asn-488–Asp-491 is G4. Residues Ser-524–Lys-526 are G5.

This sequence belongs to the TRAFAC class translation factor GTPase superfamily. Classic translation factor GTPase family. IF-2 subfamily.

The protein resides in the cytoplasm. Its function is as follows. One of the essential components for the initiation of protein synthesis. Protects formylmethionyl-tRNA from spontaneous hydrolysis and promotes its binding to the 30S ribosomal subunits. Also involved in the hydrolysis of GTP during the formation of the 70S ribosomal complex. The protein is Translation initiation factor IF-2 of Baumannia cicadellinicola subsp. Homalodisca coagulata.